A 241-amino-acid polypeptide reads, in one-letter code: Carboxy-S-adenosyl-L-methionine synthase (241 aa).

S-adenosyl-L-methionine-binding positions include Y38, 63–65, 88–89, 116–117, N131, and R198; these read GCS, DN, and DI.

The protein belongs to the class I-like SAM-binding methyltransferase superfamily. Cx-SAM synthase family. Homodimer.

The catalysed reaction is prephenate + S-adenosyl-L-methionine = carboxy-S-adenosyl-L-methionine + 3-phenylpyruvate + H2O. In terms of biological role, catalyzes the conversion of S-adenosyl-L-methionine (SAM) to carboxy-S-adenosyl-L-methionine (Cx-SAM). The polypeptide is Carboxy-S-adenosyl-L-methionine synthase (Haemophilus influenzae (strain 86-028NP)).